Here is a 112-residue protein sequence, read N- to C-terminus: Ribonuclease P protein component (112 aa).

This sequence belongs to the RnpA family. Consists of a catalytic RNA component (M1 or rnpB) and a protein subunit.

It carries out the reaction Endonucleolytic cleavage of RNA, removing 5'-extranucleotides from tRNA precursor.. In terms of biological role, RNaseP catalyzes the removal of the 5'-leader sequence from pre-tRNA to produce the mature 5'-terminus. It can also cleave other RNA substrates such as 4.5S RNA. The protein component plays an auxiliary but essential role in vivo by binding to the 5'-leader sequence and broadening the substrate specificity of the ribozyme. This chain is Ribonuclease P protein component, found in Clostridium kluyveri (strain ATCC 8527 / DSM 555 / NBRC 12016 / NCIMB 10680 / K1).